Reading from the N-terminus, the 288-residue chain is Quinate/shikimate dehydrogenase (288 aa).

The substrate site is built by K71 and D107. NAD(+) is bound by residues A132 to A135, N155 to D158, K205, C232 to N235, and G255.

The protein belongs to the shikimate dehydrogenase family. Homodimer.

The catalysed reaction is L-quinate + NAD(+) = 3-dehydroquinate + NADH + H(+). It carries out the reaction L-quinate + NADP(+) = 3-dehydroquinate + NADPH + H(+). It catalyses the reaction shikimate + NADP(+) = 3-dehydroshikimate + NADPH + H(+). The enzyme catalyses shikimate + NAD(+) = 3-dehydroshikimate + NADH + H(+). The protein operates within metabolic intermediate biosynthesis; chorismate biosynthesis; chorismate from D-erythrose 4-phosphate and phosphoenolpyruvate: step 4/7. In terms of biological role, the actual biological function of YdiB remains unclear, nor is it known whether 3-dehydroshikimate or quinate represents the natural substrate. Catalyzes the reversible NAD-dependent reduction of both 3-dehydroshikimate (DHSA) and 3-dehydroquinate to yield shikimate (SA) and quinate, respectively. It can use both NAD or NADP for catalysis, however it has higher catalytic efficiency with NAD. This Escherichia coli O7:K1 (strain IAI39 / ExPEC) protein is Quinate/shikimate dehydrogenase.